The following is a 533-amino-acid chain: Na(+)/H(+) antiporter NhaB (533 aa).

Helical transmembrane passes span isoleucine 10 to isoleucine 30, proline 67 to leucine 87, valine 96 to phenylalanine 116, valine 131 to isoleucine 165, leucine 209 to proline 229, isoleucine 247 to valine 267, alanine 310 to isoleucine 330, glutamate 355 to isoleucine 375, leucine 396 to glycine 416, alanine 454 to isoleucine 474, and alanine 485 to leucine 505.

This sequence belongs to the NhaB Na(+)/H(+) (TC 2.A.34) antiporter family.

Its subcellular location is the cell inner membrane. It catalyses the reaction 2 Na(+)(in) + 3 H(+)(out) = 2 Na(+)(out) + 3 H(+)(in). Na(+)/H(+) antiporter that extrudes sodium in exchange for external protons. This is Na(+)/H(+) antiporter NhaB from Shewanella oneidensis (strain ATCC 700550 / JCM 31522 / CIP 106686 / LMG 19005 / NCIMB 14063 / MR-1).